A 245-amino-acid chain; its full sequence is Large ribosomal subunit protein uL3 (245 aa).

Residue Gln-152 is modified to N5-methylglutamine. Positions 224 to 245 (RSKAVQAEAAAPAEAAAPEGDN) are disordered. A compositionally biased stretch (low complexity) spans 230–245 (AEAAAPAEAAAPEGDN).

Belongs to the universal ribosomal protein uL3 family. In terms of assembly, part of the 50S ribosomal subunit. Forms a cluster with proteins L14 and L19. In terms of processing, methylated by PrmB.

In terms of biological role, one of the primary rRNA binding proteins, it binds directly near the 3'-end of the 23S rRNA, where it nucleates assembly of the 50S subunit. The sequence is that of Large ribosomal subunit protein uL3 from Paracoccus denitrificans (strain Pd 1222).